A 141-amino-acid chain; its full sequence is MLQPKRTKYRKVQKGRMKGNSQRGHELSNGMFGIKSVHEDGMFLTSRQIEAARIAATRYMKREGQLWIKIFPDKPITKKPLEVRMGKGKGAVEYWAAVVKPGRIMFEVGGVPLSVAKEALRLAAQKLPVKTKFVVARDFEA.

Basic residues predominate over residues 1–17; that stretch reads MLQPKRTKYRKVQKGRM. Residues 1-29 are disordered; sequence MLQPKRTKYRKVQKGRMKGNSQRGHELSN.

It belongs to the universal ribosomal protein uL16 family. In terms of assembly, part of the 50S ribosomal subunit.

Functionally, binds 23S rRNA and is also seen to make contacts with the A and possibly P site tRNAs. The protein is Large ribosomal subunit protein uL16 of Flavobacterium johnsoniae (strain ATCC 17061 / DSM 2064 / JCM 8514 / BCRC 14874 / CCUG 350202 / NBRC 14942 / NCIMB 11054 / UW101) (Cytophaga johnsonae).